Here is a 331-residue protein sequence, read N- to C-terminus: Flotillin-like protein FloA (331 aa).

2 consecutive transmembrane segments (helical) span residues 6–26 (LMIL…FTFV) and 28–48 (VMLW…TLVG). Residues 236 to 331 (QTDQAEADKN…KDPSDEDRKS (96 aa)) are required for correct localization. Short sequence motifs (EA repeat) lie at residues 240–242 (AEA), 251–253 (AEE), 278–282 (EAEAE), and 288–290 (AEA). The disordered stretch occupies residues 312–331 (EMRDSFGKLTKDPSDEDRKS).

Belongs to the flotillin-like FloA family. Homooligomerizes. Interacts with FloT. Interacts with FtsH midcell. Interacts with PhoR, colocalizes with PhoR in FloA-only membrane rafts.

The protein localises to the cell membrane. It is found in the membrane raft. Its function is as follows. Found in functional membrane microdomains (FMM) that may be equivalent to eukaryotic membrane rafts. FMMs are highly dynamic and increase in number as cells age. FloA and FloT function is partially redundant; double deletions have marked synthetic phenotypes. Flotillins are thought to be important factors in membrane fluidity, especially during periods of rapid growth in rich media. Whether specific proteins are associated with FMMs is controversial; in one study FloT rafts have been shown to include proteins involved in adaptation to stationary phase, while FloA-FloT rafts include proteins involved in differentiation including sporulation, biofilm formation and DNA uptake competence. Another (more finely resolved) study only showed association of NfeD2 with FloT rafts of all the proteins examined. Involved in spatial organization of membranes, perhaps recruiting proteins to specific membrane regions. Simultaneous overexpression of both FloA and FloT leads to defects in cell division and differentiation, in part caused by stabilization of FtsH and its subsequent increased ability to degrade proteins. Cells make more biofilm, are about half as long, have less EzrA and more frequent Z-rings. The protein is Flotillin-like protein FloA of Bacillus subtilis (strain 168).